Reading from the N-terminus, the 224-residue chain is 25 kDa integral membrane protein (224 aa).

Topologically, residues 1–12 are cytoplasmic; sequence MKLSFTKVSLTN. A helical membrane pass occupies residues 13–33; the sequence is ILILFNCLFIIFSMIVLTFGV. Residues 34–52 are Extracellular-facing; the sequence is IPQIYLLKFANILHGVRPS. The chain crosses the membrane as a helical span at residues 53 to 73; that stretch reads IFPIVCFTGSFVIIVACVGII. Topologically, residues 74-80 are cytoplasmic; sequence GLMKGGK. A helical membrane pass occupies residues 81 to 101; it reads CLLTMHIIALIIATIIDISTA. Topologically, residues 102–189 are extracellular; sequence TLSAIKQNEF…LNKYVRYYID (88 aa). N-linked (GlcNAc...) asparagine glycosylation is present at N120. A helical transmembrane segment spans residues 190–210; it reads ILIYLCFIFGFIKLIYSLFTF. Topologically, residues 211 to 224 are cytoplasmic; that stretch reads TQRQRIFSEKTPVA.

This sequence belongs to the tetraspanin (TM4SF) family.

The protein resides in the membrane. This Schistosoma japonicum (Blood fluke) protein is 25 kDa integral membrane protein.